Consider the following 1105-residue polypeptide: KAT8 regulatory NSL complex subunit 1 (1105 aa).

Residue lysine 104 is modified to N6-acetyllysine. Disordered regions lie at residues 145–211 (GQTA…CTLP) and 225–263 (NNST…GVKL). Over residues 225 to 258 (NNSTANKSSVNSMEQPALQGSSRLSPGTDSSSNL) the composition is skewed to polar residues. Serine 249 carries the phosphoserine modification. A Glycyl lysine isopeptide (Lys-Gly) (interchain with G-Cter in SUMO2) cross-link involves residue lysine 262. Residue serine 268 is modified to Phosphoserine. Positions 283–314 (RITALLRRQADIESRARRLQKRLQVVQAKQVE) form a coiled coil. Lysine 331 is covalently cross-linked (Glycyl lysine isopeptide (Lys-Gly) (interchain with G-Cter in SUMO2)). Disordered stretches follow at residues 399-426 (DSDV…PEQR) and 733-857 (TAKL…RRGE). Basic and acidic residues-rich tracts occupy residues 741–753 (TRPD…HLDD) and 780–804 (DPNH…HHTD). A compositionally biased stretch (low complexity) spans 827–850 (STSSDSPAPASSSSQVTASTSQQP). The tract at residues 850–882 (PVRRRRGESSFDINNIVIPMSVAATTRVEKLQY) is required for activation of KAT8 histone acetyltransferase activity. The PEHE domain maps to 884–1035 (EILTPSWREV…GLDEQSVQPW (152 aa)). Residues 910 to 928 (EDLSDAAFAALHAKCEEME) are interaction with KAT8 HAT domain. A disordered region spans residues 938-1034 (VPPQRRGSRS…LGLDEQSVQP (97 aa)). Positions 955–965 (TTPQLGSANPS) are enriched in polar residues. The span at 975 to 988 (SSSHSLSEYSHGQS) shows a compositional bias: low complexity. Phosphoserine is present on residues serine 991 and serine 994. Threonine 1003 carries the phosphothreonine modification. Residues 1008–1019 (DTPRHLASEDTR) are compositionally biased toward basic and acidic residues. Position 1045 is a phosphoserine (serine 1045). The interval 1058 to 1105 (ERAARCTRRTSGSKTGRETEAAPTSPPIVPLKSRHLVAAATAQRPTHR) is disordered.

In terms of assembly, component of the NSL complex at least composed of MOF/KAT8, KANSL1, KANSL2, KANSL3, MCRS1, PHF20, OGT1/OGT, WDR5 and HCFC1. Interacts (via PEHE domain) with KAT8 (via HAT domain); the interaction is direct. Component of some MLL1/MLL complex, at least composed of the core components KMT2A/MLL1, ASH2L, HCFC1, WDR5 and RBBP5, as well as the facultative components BACC1, CHD8, E2F6, HSP70, INO80C, KANSL1, LAS1L, MAX, MCRS1, MGA, KAT8/MOF, PELP1, PHF20, PRP31, RING2, RUVB1/TIP49A, RUVB2/TIP49B, SENP3, TAF1, TAF4, TAF6, TAF7, TAF9 and TEX10. As to expression, expressed in the brain.

Its subcellular location is the nucleus. It is found in the chromosome. It localises to the centromere. The protein localises to the kinetochore. The protein resides in the mitochondrion. Its subcellular location is the cytoplasm. It is found in the cytoskeleton. It localises to the spindle pole. Functionally, non-catalytic component of the NSL histone acetyltransferase complex, a multiprotein complex that mediates histone H4 acetylation at 'Lys-5'- and 'Lys-8' (H4K5ac and H4K8ac) at transcription start sites and promotes transcription initiation. The NSL complex also acts as a regulator of gene expression in mitochondria. In addition to its role in transcription, KANSL1 also plays an essential role in spindle assembly during mitosis. Associates with microtubule ends and contributes to microtubule stability. This Homo sapiens (Human) protein is KAT8 regulatory NSL complex subunit 1 (KANSL1).